Consider the following 447-residue polypeptide: NADH-ubiquinone oxidoreductase chain 4 (447 aa).

Transmembrane regions (helical) follow at residues Ile28–Ile48, Met56–Ser76, Tyr85–Ser105, Phe110–Trp130, Ile141–Ile161, Phe183–Leu203, Pro213–Leu233, Phe246–Leu266, Ala273–Met293, Ser301–Ile321, Ser343–Leu365, Leu380–Phe400, and Tyr409–Leu431.

The protein belongs to the complex I subunit 4 family.

The protein resides in the mitochondrion membrane. It carries out the reaction a ubiquinone + NADH + 5 H(+)(in) = a ubiquinol + NAD(+) + 4 H(+)(out). In terms of biological role, core subunit of the mitochondrial membrane respiratory chain NADH dehydrogenase (Complex I) that is believed to belong to the minimal assembly required for catalysis. Complex I functions in the transfer of electrons from NADH to the respiratory chain. The immediate electron acceptor for the enzyme is believed to be ubiquinone. The protein is NADH-ubiquinone oxidoreductase chain 4 of Aedes aegypti (Yellowfever mosquito).